Consider the following 65-residue polypeptide: DNA gyrase inhibitor YacG (65 aa).

Zn(2+) is bound by residues Cys9, Cys12, Cys28, and Cys32. The disordered stretch occupies residues 45–65 (KRIPSSGDLSESDDWSEEPKQ). Over residues 54–65 (SESDDWSEEPKQ) the composition is skewed to acidic residues.

The protein belongs to the DNA gyrase inhibitor YacG family. Interacts with GyrB. The cofactor is Zn(2+).

Its function is as follows. Inhibits all the catalytic activities of DNA gyrase by preventing its interaction with DNA. Acts by binding directly to the C-terminal domain of GyrB, which probably disrupts DNA binding by the gyrase. This is DNA gyrase inhibitor YacG from Shigella boydii serotype 18 (strain CDC 3083-94 / BS512).